The chain runs to 21 residues: Brevinin-2-related peptide (21 aa).

L21 bears the Leucine amide mark.

In terms of tissue distribution, expressed by the skin glands.

It is found in the secreted. Its function is as follows. Antimicrobial peptide with activity against Gram-negative and Gram-positive bacteria (MIC=13 uM against E.coli, MIC=25 uM against S.aureus) and fungi (MIC=25 uM against C.albicans). Also shows hemolytic activity (HC(50)=50 uM). In vitro, shows moderate inhibitory activity against HIV. This chain is Brevinin-2-related peptide, found in Lithobates septentrionalis (Mink frog).